A 92-amino-acid chain; its full sequence is uncharacterized protein (92 aa).

The HTH cro/C1-type domain maps to 25–83 (LEEKLKQEKIDRKYLAQVTNIPYTTVSRIMRAEANREFNPEIDTILKIAKYFNCTMDEV). The segment at residues 36-55 (RKYLAQVTNIPYTTVSRIMR) is a DNA-binding region (H-T-H motif).

This is an uncharacterized protein from Rickettsia prowazekii (strain Madrid E).